Consider the following 164-residue polypeptide: Choriogonadotropin subunit beta (164 aa).

The signal sequence occupies residues 1-20; sequence MEMLQGLLLCLLLSTGGAWA. Cystine bridges form between Cys29/Cys77, Cys43/Cys92, Cys46/Cys130, Cys54/Cys108, Cys58/Cys110, and Cys113/Cys120. Asn50 carries an N-linked (GlcNAc...) asparagine glycan. Residues 135 to 164 are disordered; that stretch reads FQDSSSKDPPRNLTSPSQLLEPADPPLVPQ. Ser140 carries O-linked (GalNAc...) serine glycosylation. N-linked (GlcNAc...) asparagine glycosylation occurs at Asn146. Ser151 is a glycosylation site (O-linked (GalNAc...) serine).

This sequence belongs to the glycoprotein hormones subunit beta family. Heterodimer of a common alpha chain and a unique beta chain which confers biological specificity to thyrotropin, lutropin, follitropin and gonadotropin. In terms of tissue distribution, placenta.

It is found in the secreted. Its function is as follows. Stimulates the ovaries to synthesize the steroids that are essential for the maintenance of pregnancy. The sequence is that of Choriogonadotropin subunit beta (CGB) from Callithrix jacchus (White-tufted-ear marmoset).